Consider the following 198-residue polypeptide: Peptidyl-tRNA hydrolase (198 aa).

Y15 serves as a coordination point for tRNA. The Proton acceptor role is filled by H20. F66, N68, and N114 together coordinate tRNA.

Belongs to the PTH family. In terms of assembly, monomer.

The protein resides in the cytoplasm. The enzyme catalyses an N-acyl-L-alpha-aminoacyl-tRNA + H2O = an N-acyl-L-amino acid + a tRNA + H(+). Functionally, hydrolyzes ribosome-free peptidyl-tRNAs (with 1 or more amino acids incorporated), which drop off the ribosome during protein synthesis, or as a result of ribosome stalling. In terms of biological role, catalyzes the release of premature peptidyl moieties from peptidyl-tRNA molecules trapped in stalled 50S ribosomal subunits, and thus maintains levels of free tRNAs and 50S ribosomes. This is Peptidyl-tRNA hydrolase from Cupriavidus taiwanensis (strain DSM 17343 / BCRC 17206 / CCUG 44338 / CIP 107171 / LMG 19424 / R1) (Ralstonia taiwanensis (strain LMG 19424)).